The chain runs to 626 residues: ATP-dependent zinc metalloprotease FtsH (626 aa).

At 1–5 (MNFRN) the chain is on the cytoplasmic side. A helical membrane pass occupies residues 6–26 (LAIWLVIVAVLGGVFVVSQNS). Over 27–98 (RTKSSSEISY…DVKFKSGSIS (72 aa)) the chain is Periplasmic. A helical membrane pass occupies residues 99–119 (FLAILVQLLPILLVVGVWLFL). The Cytoplasmic segment spans residues 120–626 (MRQMQGGAKG…SPGAGASVTA (507 aa)). Position 191 to 198 (191 to 198 (GPPGTGKT)) interacts with ATP. His-413 lines the Zn(2+) pocket. Residue Glu-414 is part of the active site. 2 residues coordinate Zn(2+): His-417 and Asp-491.

The protein in the central section; belongs to the AAA ATPase family. It in the C-terminal section; belongs to the peptidase M41 family. Homohexamer. Zn(2+) is required as a cofactor.

The protein resides in the cell inner membrane. In terms of biological role, acts as a processive, ATP-dependent zinc metallopeptidase for both cytoplasmic and membrane proteins. Plays a role in the quality control of integral membrane proteins. Functionally, absence of FtsH leads to increased sigma-32 levels, which suggests, in analogy to E.coli, that sigma-32 is a substrate for FtsH. May play a role in the general stress response, as overexpression leads to improved resistance to salt stress. The protein is ATP-dependent zinc metalloprotease FtsH of Caulobacter vibrioides (strain NA1000 / CB15N) (Caulobacter crescentus).